A 163-amino-acid polypeptide reads, in one-letter code: Phosphopantetheine adenylyltransferase (163 aa).

Threonine 11 is a binding site for substrate. ATP-binding positions include 11 to 12 (TF) and histidine 19. Substrate is bound by residues lysine 43, leucine 75, and arginine 89. Residues 90 to 92 (GLR), glutamate 100, and 125 to 131 (YSFISST) contribute to the ATP site.

The protein belongs to the bacterial CoaD family. As to quaternary structure, homohexamer. Mg(2+) is required as a cofactor.

It is found in the cytoplasm. The catalysed reaction is (R)-4'-phosphopantetheine + ATP + H(+) = 3'-dephospho-CoA + diphosphate. The protein operates within cofactor biosynthesis; coenzyme A biosynthesis; CoA from (R)-pantothenate: step 4/5. Its function is as follows. Reversibly transfers an adenylyl group from ATP to 4'-phosphopantetheine, yielding dephospho-CoA (dPCoA) and pyrophosphate. This is Phosphopantetheine adenylyltransferase from Acinetobacter baylyi (strain ATCC 33305 / BD413 / ADP1).